The following is a 1033-amino-acid chain: NACHT, LRR and PYD domains-containing protein 11 (1033 aa).

The Pyrin domain maps to 1–91 (MAESDSTDFD…CRKIIGRRNR (91 aa)). The 324-residue stretch at 147-470 (LNVFLMGERA…AFLMAVPNYL (324 aa)) folds into the NACHT domain. 153-160 (GERASGKT) lines the ATP pocket. 6 LRR repeats span residues 588–611 (CCHL…LIRP), 632–655 (MESL…ILSK), 745–768 (GGSL…ILCD), 802–827 (SPTL…TFPL), 859–882 (NEKL…LLCG), and 919–944 (LERL…LISP).

Belongs to the NLRP family.

Functionally, involved in inflammation. This Homo sapiens (Human) protein is NACHT, LRR and PYD domains-containing protein 11 (NLRP11).